The primary structure comprises 51 residues: Large ribosomal subunit protein bL33 (51 aa).

Belongs to the bacterial ribosomal protein bL33 family.

In Colwellia psychrerythraea (strain 34H / ATCC BAA-681) (Vibrio psychroerythus), this protein is Large ribosomal subunit protein bL33.